The sequence spans 244 residues: Prolactin-7D1 (244 aa).

Residues 1–30 (MLPSLIQPCSSGTLLMLLMSNLFLWEKVSS) form the signal peptide. 2 disulfide bridges follow: C99/C215 and C232/C240.

This sequence belongs to the somatotropin/prolactin family.

It localises to the secreted. This Mus musculus (Mouse) protein is Prolactin-7D1 (Prl7d1).